The following is a 394-amino-acid chain: Elongation factor Tu 2 (394 aa).

Residues K10–E204 form the tr-type G domain. A G1 region spans residues G19 to T26. GTP is bound at residue G19–T26. Residue T26 coordinates Mg(2+). The interval G60–N64 is G2. Residues D81 to G84 are G3. Residues D81 to H85 and N136 to D139 contribute to the GTP site. The segment at N136–D139 is G4. Residues S174–L176 form a G5 region.

It belongs to the TRAFAC class translation factor GTPase superfamily. Classic translation factor GTPase family. EF-Tu/EF-1A subfamily. Monomer.

The protein resides in the cytoplasm. The catalysed reaction is GTP + H2O = GDP + phosphate + H(+). In terms of biological role, GTP hydrolase that promotes the GTP-dependent binding of aminoacyl-tRNA to the A-site of ribosomes during protein biosynthesis. The sequence is that of Elongation factor Tu 2 from Serratia proteamaculans (strain 568).